Here is a 219-residue protein sequence, read N- to C-terminus: Triosephosphate isomerase (219 aa).

Substrate is bound at residue 6–8 (NYK). Catalysis depends on His90, which acts as the Electrophile. Glu138 functions as the Proton acceptor in the catalytic mechanism. Residues Ile143, Gly178, and 199-200 (AS) contribute to the substrate site.

The protein belongs to the triosephosphate isomerase family. In terms of assembly, homotetramer; dimer of dimers.

Its subcellular location is the cytoplasm. It catalyses the reaction D-glyceraldehyde 3-phosphate = dihydroxyacetone phosphate. It functions in the pathway carbohydrate biosynthesis; gluconeogenesis. The protein operates within carbohydrate degradation; glycolysis; D-glyceraldehyde 3-phosphate from glycerone phosphate: step 1/1. Its function is as follows. Involved in the gluconeogenesis. Catalyzes stereospecifically the conversion of dihydroxyacetone phosphate (DHAP) to D-glyceraldehyde-3-phosphate (G3P). This Methanocaldococcus jannaschii (strain ATCC 43067 / DSM 2661 / JAL-1 / JCM 10045 / NBRC 100440) (Methanococcus jannaschii) protein is Triosephosphate isomerase.